Consider the following 448-residue polypeptide: Adenylosuccinate synthetase 1 (448 aa).

GTP-binding positions include 22-28 and 50-52; these read GDEGKGK and GHT. D23 (proton acceptor) is an active-site residue. Mg(2+) contacts are provided by D23 and G50. IMP is bound by residues 23-26, 48-51, T139, R153, Q234, T249, and R321; these read DEGK and NAGH. Residue H51 is the Proton donor of the active site. Substrate is bound at residue 317-323; it reads SVTGRPR. Residues R323, 349–351, and 431–433 each bind GTP; these read KLD and STG.

This sequence belongs to the adenylosuccinate synthetase family. Homodimer. The cofactor is Mg(2+).

The protein localises to the cytoplasm. It catalyses the reaction IMP + L-aspartate + GTP = N(6)-(1,2-dicarboxyethyl)-AMP + GDP + phosphate + 2 H(+). Its pathway is purine metabolism; AMP biosynthesis via de novo pathway; AMP from IMP: step 1/2. Its function is as follows. Plays an important role in the de novo pathway of purine nucleotide biosynthesis. Catalyzes the first committed step in the biosynthesis of AMP from IMP. The polypeptide is Adenylosuccinate synthetase 1 (Burkholderia lata (strain ATCC 17760 / DSM 23089 / LMG 22485 / NCIMB 9086 / R18194 / 383)).